We begin with the raw amino-acid sequence, 316 residues long: Adenine deaminase (316 aa).

Histidine 14, histidine 16, and histidine 194 together coordinate Zn(2+). Glutamate 197 functions as the Proton donor in the catalytic mechanism. Residue aspartate 275 participates in Zn(2+) binding. Aspartate 276 contributes to the substrate binding site.

It belongs to the metallo-dependent hydrolases superfamily. Adenosine and AMP deaminases family. Adenine deaminase type 2 subfamily. Zn(2+) is required as a cofactor.

It carries out the reaction adenine + H2O + H(+) = hypoxanthine + NH4(+). Catalyzes the hydrolytic deamination of adenine to hypoxanthine. Plays an important role in the purine salvage pathway and in nitrogen catabolism. In Pseudomonas aeruginosa (strain LESB58), this protein is Adenine deaminase.